Consider the following 116-residue polypeptide: Large ribosomal subunit protein bL19 (116 aa).

Belongs to the bacterial ribosomal protein bL19 family.

Functionally, this protein is located at the 30S-50S ribosomal subunit interface and may play a role in the structure and function of the aminoacyl-tRNA binding site. This Solidesulfovibrio magneticus (strain ATCC 700980 / DSM 13731 / RS-1) (Desulfovibrio magneticus) protein is Large ribosomal subunit protein bL19.